Here is a 201-residue protein sequence, read N- to C-terminus: Acyl-homoserine-lactone synthase (201 aa).

The protein belongs to the autoinducer synthase family.

The catalysed reaction is a fatty acyl-[ACP] + S-adenosyl-L-methionine = an N-acyl-L-homoserine lactone + S-methyl-5'-thioadenosine + holo-[ACP] + H(+). In terms of biological role, required for the synthesis of PAI consisting of 3-oxo-N-(tetrahydro-2-oxo-3-furanyl)-dodecanamide also known as N-(3-oxododecanoyl)homoserine lactone, an autoinducer molecule which binds to LasR and thus acts in elastase biosynthesis regulation. This is Acyl-homoserine-lactone synthase (lasI) from Pseudomonas aeruginosa (strain ATCC 15692 / DSM 22644 / CIP 104116 / JCM 14847 / LMG 12228 / 1C / PRS 101 / PAO1).